We begin with the raw amino-acid sequence, 485 residues long: Protein nucleotidyltransferase YdiU (485 aa).

ATP-binding residues include Gly90, Gly92, Arg93, Lys113, Asp125, Gly126, Arg176, and Arg183. The active-site Proton acceptor is the Asp252. Residues Asn253 and Asp262 each coordinate Mg(2+). Asp262 serves as a coordination point for ATP.

Belongs to the SELO family. Requires Mg(2+) as cofactor. The cofactor is Mn(2+).

It carries out the reaction L-seryl-[protein] + ATP = 3-O-(5'-adenylyl)-L-seryl-[protein] + diphosphate. It catalyses the reaction L-threonyl-[protein] + ATP = 3-O-(5'-adenylyl)-L-threonyl-[protein] + diphosphate. The catalysed reaction is L-tyrosyl-[protein] + ATP = O-(5'-adenylyl)-L-tyrosyl-[protein] + diphosphate. The enzyme catalyses L-histidyl-[protein] + UTP = N(tele)-(5'-uridylyl)-L-histidyl-[protein] + diphosphate. It carries out the reaction L-seryl-[protein] + UTP = O-(5'-uridylyl)-L-seryl-[protein] + diphosphate. It catalyses the reaction L-tyrosyl-[protein] + UTP = O-(5'-uridylyl)-L-tyrosyl-[protein] + diphosphate. Functionally, nucleotidyltransferase involved in the post-translational modification of proteins. It can catalyze the addition of adenosine monophosphate (AMP) or uridine monophosphate (UMP) to a protein, resulting in modifications known as AMPylation and UMPylation. This chain is Protein nucleotidyltransferase YdiU, found in Aliivibrio salmonicida (strain LFI1238) (Vibrio salmonicida (strain LFI1238)).